The chain runs to 1514 residues: Polycomb group protein ASXL1 (1514 aa).

The HTH HARE-type domain occupies 11–86; the sequence is RTWAEAARLV…RISLFTLKKD (76 aa). 2 disordered regions span residues 95–170 and 183–249; these read ATVD…VMLP and HVEP…RGEE. The segment covering 98–107 has biased composition (acidic residues); sequence DGDEPEDSAD. Residues 111–145 show a composition bias toward polar residues; it reads CGSNEASTVSGENDVSLDETSSNASCSTESQSRPL. The segment covering 199–209 has biased composition (low complexity); sequence SGSPSSSSSGS. The interval 243–246 is interaction with nucleosomal DNA forming a DNA clamp with BAP1; it reads KRNR. The 110-residue stretch at 255 to 364 folds into the DEUBAD domain; sequence PGSILVNTNL…FEDYYGQKLG (110 aa). The short motif at 284–288 is the LXXLL motif 1 element; the sequence is LLLLL. Positions 300 to 655 are interaction with NCOA1; that stretch reads LLRLSGSALN…GGGSGAIDEG (356 aa). Positions 310 to 315 match the NEF motif motif; that stretch reads NEFFTH. The interaction with nucleosomal DNA stretch occupies residues 336–346; the sequence is RLRQEMEKEKK. Disordered stretches follow at residues 378 to 543, 635 to 823, 895 to 914, 926 to 952, and 964 to 995; these read EEAK…EDRQ, TTAI…FDNM, SDPE…EKEW, SVPQ…SDSE, and ISEA…VDAS. Residues 408 to 415 carry the Nuclear localization signal motif; the sequence is FKKRSRPD. A compositionally biased stretch (polar residues) spans 458–473; sequence VNSTPGPDVSSATSGQ. Ser498 and Ser500 each carry phosphoserine. Composition is skewed to basic and acidic residues over residues 514–525 and 533–543; these read QETKDQKRKSFE and PEKKPRLEDRQ. Over residues 638-654 the composition is skewed to gly residues; sequence IGGGGGPGGGGSGAIDE. Polar residues predominate over residues 678–692; the sequence is PSTSGESASDLQRTQ. Composition is skewed to basic and acidic residues over residues 713 to 728 and 779 to 793; these read ARRE…ESCL and LLDD…REDQ. The LXXLL motif 2 signature appears at 808–812; sequence LGDLL. Over residues 971-980 the composition is skewed to polar residues; sequence HSESTDTASD. The required for interaction with RARA stretch occupies residues 1082 to 1087; that stretch reads LVMHLL. 3 disordered regions span residues 1095-1131, 1213-1234, and 1256-1338; these read KVLP…ENNR, EQKE…GQCL, and SEQT…VSAD. Polar residues predominate over residues 1119–1129; it reads DRGTLQGTGEN. 2 stretches are compositionally biased toward polar residues: residues 1256–1269 and 1313–1324; these read SEQT…QNNA and SKNSVSGGVQTT. Residues 1476 to 1513 form a PHD-type; atypical zinc finger; that stretch reads SLQCACSLKAMIMCQGCGAFCHDDCIGPSKLCVLCLVV.

It belongs to the Asx family. Core component of the polycomb repressive deubiquitinase (PR-DUB) complex, at least composed of BAP1, one of ASXL1, ASXL2 or (probably) ASXL3, and one of MBD5 or MBD6. Distinct combinations of ASXL and MBD proteins may preferentially bind specific histone modification marks. The PR-DUB core associates with a number of accessory proteins, including FOXK1, FOXK2, KDM1B, HCFC1 and OGT; KDM1B specifically associates with ASXL2 PR-DUB complexes. Interacts (via DEUBAD domain) with BAP1 (via ULD domain); the interaction is direct and forms a ubiquitin binding cleft. The interaction with BAP1 is important for maintaining BAP1 stability. Together with BAP1, associates (via DEUBAD domain) with nucleosomes; interacts with nucleosomal DNA and stabilizes the orientation of the nucleosome to line up the PR-DUB complex active site with its H2AK118ub1 substrate. Interacts (via PHD domain) with MBD5 and MBD6 (via MBD domain); the interaction is probably direct and mediates association of MBD proteins with the PR-DUB core. Interacts with RARA, RXRA. Interacts with NCOA1. Interacts with PPARA and PPARG. In terms of processing, ubiquitinated by TRIP12, leading to its subsequent degradation following binding of N(6)-methyladenine methylated DNA (6mA).

The protein resides in the nucleus. Its function is as follows. Probable Polycomb group (PcG) protein involved in transcriptional regulation mediated by ligand-bound nuclear hormone receptors, such as retinoic acid receptors (RARs) and peroxisome proliferator-activated receptor gamma (PPARG). Acts as a coactivator of RARA and RXRA through association with NCOA1. Acts as a corepressor for PPARG and suppresses its adipocyte differentiation-inducing activity. Non-catalytic component of the PR-DUB complex, a complex that specifically mediates deubiquitination of histone H2A monoubiquitinated at 'Lys-119' (H2AK119ub1). Acts as a sensor of N(6)-methyladenine methylation on DNA (6mA): recognizes and binds 6mA DNA, leading to its ubiquitination and degradation by TRIP12, thereby inactivating the PR-DUB complex and regulating Polycomb silencing. The PR-DUB complex is an epigenetic regulator of gene expression and acts as a transcriptional coactivator, affecting genes involved in development, cell communication, signaling, cell proliferation and cell viability. ASXL1, ASXL2 and ASXL3 function redundantly in the PR-DUB complex. The ASXL proteins are essential for chromatin recruitment and transcriptional activation of associated genes. ASXL1 and ASXL2 are important for BAP1 protein stability. Together with BAP1, negatively regulates epithelial-mesenchymal transition (EMT) of trophoblast stem cells during placental development by regulating genes involved in epithelial cell integrity, cell adhesion and cytoskeletal organization. The protein is Polycomb group protein ASXL1 (Asxl1) of Mus musculus (Mouse).